The primary structure comprises 1283 residues: 5-oxoprolinase PfmaA (1283 aa).

Residues 1256-1283 (NTPGGGAWGKPEGDADGYREEDQAGDGI) form a disordered region. A compositionally biased stretch (basic and acidic residues) spans 1266-1277 (PEGDADGYREED).

Belongs to the oxoprolinase family. Homodimer.

The enzyme catalyses 5-oxo-L-proline + ATP + 2 H2O = L-glutamate + ADP + phosphate + H(+). Functionally, 5-oxoprolinase; part of the gene cluster that mediates the biosynthesis of dihydroxynaphthalene (DHN)-melanin, a bluish-green pigment forming a dark layer in the conidial wall that protects the conidia from UV radiations. The first step of the pathway is the production of the pentaketide 1,3,6,8-tetrahydroxynaphthalene (1,3,6,8-THN or T4HN) by the polyketide synthase PfmaE though condensation of acetyl-CoA with malonyl-CoA. T4HN is not stable and easily oxidizes into the stable form flaviolin. T4HN is also substrate of the hydroxynaphthalene reductase PfmaG to yield scytalone. The scytalone dehydratase PfmaJ then reduces scytalone to 1,3,8-THN. 1,3,8-THN is then substrate of the hydroxynaphthalene reductase PfmaI to yield vermelone. Vermelone is further converted by the multicopper oxidase PfmaD to 1,8-DHN. Finally the laccase PFICI_06862 transforms 1,8-DHN to DHN-melanin. The roles of the 5-oxoprolinase PfmaA and the proline iminopeptidase PfmaB within the cluster have not been elucidated yet. This chain is 5-oxoprolinase PfmaA, found in Pestalotiopsis fici (strain W106-1 / CGMCC3.15140).